The chain runs to 354 residues: Sulfate permease CysP (354 aa).

A run of 8 helical transmembrane segments spans residues 3–23 (LAAILFSLFFAMNIGASGAAA), 40–60 (ALILCAVGVFAGAVIGGGEVV), 77–97 (IVCIIIGAAALSLFTANLLGI), 125–145 (LIIVSFWVFVPLFAFGFTYFV), 164–184 (ILGIVLLVAGFFEAFSAGMNN), 197–217 (VLDVGKGTLYGGAFVALGALL), 293–313 (VWIVSPFLSLSISYLLVSLFL), and 320–340 (IFIMVSVLLAAGGAISLTKAI).

Belongs to the inorganic phosphate transporter (PiT) (TC 2.A.20) family.

The protein resides in the cell membrane. Involved in the import of sulfate. This is Sulfate permease CysP (cysP) from Bacillus subtilis (strain 168).